The sequence spans 243 residues: MRTPTGDLSDGPAEELGRDQPVFGPEIGEFEHSERRAAQADGEGEMKTGTTTVGIKTADGVVMATDMRASLGGMVSSKDVQKVEEVHPRGALTIAGSVSAAQNLISTLKAETSLYETRRGKDMSMEALSTLTGNLLRSGAFYIVQPILGGVDDEGSHIYSIDALGGTTEEEYTVTGSGSQYALGVLEQEYDDDVTVDEAKTMAAKAIQSAVERDLASGNGINVAVVTDDGVDITRYKDFDDLL.

Positions 1-49 (MRTPTGDLSDGPAEELGRDQPVFGPEIGEFEHSERRAAQADGEGEMKTG) are cleaved as a propeptide — removed in mature form; by autocatalysis. Positions 1 to 50 (MRTPTGDLSDGPAEELGRDQPVFGPEIGEFEHSERRAAQADGEGEMKTGT) are disordered. Residues 29–38 (EFEHSERRAA) are compositionally biased toward basic and acidic residues. The Nucleophile role is filled by T50.

Belongs to the peptidase T1B family. As to quaternary structure, the 20S proteasome core is composed of 14 alpha and 14 beta subunits that assemble into four stacked heptameric rings, resulting in a barrel-shaped structure. The two inner rings, each composed of seven catalytic beta subunits, are sandwiched by two outer rings, each composed of seven alpha subunits. The catalytic chamber with the active sites is on the inside of the barrel. Has a gated structure, the ends of the cylinder being occluded by the N-termini of the alpha-subunits. Is capped at one or both ends by the proteasome regulatory ATPase, PAN.

The protein resides in the cytoplasm. It carries out the reaction Cleavage of peptide bonds with very broad specificity.. The formation of the proteasomal ATPase PAN-20S proteasome complex, via the docking of the C-termini of PAN into the intersubunit pockets in the alpha-rings, triggers opening of the gate for substrate entry. Interconversion between the open-gate and close-gate conformations leads to a dynamic regulation of the 20S proteasome proteolysis activity. Component of the proteasome core, a large protease complex with broad specificity involved in protein degradation. The sequence is that of Proteasome subunit beta from Halorubrum lacusprofundi (strain ATCC 49239 / DSM 5036 / JCM 8891 / ACAM 34).